The following is a 64-amino-acid chain: Alpha-conotoxin-like Lp1.8 (64 aa).

An N-terminal signal peptide occupies residues 1–21 (MGMRMMFTMFLLVVLTTTVVS). The propeptide occupies 22-41 (FNSDRESNHENRRTSNQITR). Cystine bridges form between C47-C53 and C48-C61. Residues 49-51 (KDP) are lacks the Ser-Xaa-Pro motif that is crucial for potent interaction with nAChR.

The protein belongs to the conotoxin A superfamily. Expressed by the venom duct.

The protein localises to the secreted. In terms of biological role, alpha-conotoxins act on postsynaptic membranes, they bind to the nicotinic acetylcholine receptors (nAChR) and thus inhibit them. Has possibly a distinct nAChR binding mode from other alpha-conotoxins, due to a different three residue motif (Lys-Xaa-Pro instead of the conserved Ser-Xaa-Pro motif). This is Alpha-conotoxin-like Lp1.8 from Conus leopardus (Leopard cone).